Consider the following 959-residue polypeptide: UPF0182 protein MAE_41360 (959 aa).

Transmembrane regions (helical) follow at residues proline 13–asparagine 33, leucine 50–threonine 70, leucine 99–tyrosine 119, aspartate 156–isoleucine 176, isoleucine 184–phenylalanine 204, leucine 239–serine 259, leucine 276–isoleucine 296, valine 319–glycine 339, and phenylalanine 362–isoleucine 382.

It belongs to the UPF0182 family.

Its subcellular location is the cell membrane. The polypeptide is UPF0182 protein MAE_41360 (Microcystis aeruginosa (strain NIES-843 / IAM M-2473)).